The sequence spans 751 residues: Photosystem I P700 chlorophyll a apoprotein A1 (751 aa).

Transmembrane regions (helical) follow at residues 73–96, 159–182, 198–222, 294–312, 349–372, 388–414, 436–458, and 533–551; these read VFSAHFGQLGVIFIWLSGMYFHGA, LYSTAIGALICAGLMFFAGWWHYH, MNHHLAGLLGLGSLAWAGHQIHIAL, MAHHHLAIAVLFLVAGHQY, WHAQLAINLALMGSLSIIVSHHMY, LSLFTHHMWIGGFCICGAAAHAAIFMV, AIISHLNWVCIFLGFHSFGLYIH, and FMVHHIHAFTIHVTVLILL. The [4Fe-4S] cluster site is built by cysteine 575 and cysteine 584. The next 2 membrane-spanning stretches (helical) occupy residues 591–612 and 665–687; these read HVFLGLFWMYNSISIVIFHFSW and LSAYGLIFLGAHFIWAFSLMFLF. Residue histidine 676 participates in chlorophyll a' binding. Methionine 684 and tyrosine 692 together coordinate chlorophyll a. Tryptophan 693 lines the phylloquinone pocket. Residues 725-745 traverse the membrane as a helical segment; the sequence is AVGVAHYLLGGIATTWSFFLA.

This sequence belongs to the PsaA/PsaB family. In terms of assembly, the PsaA/B heterodimer binds the P700 chlorophyll special pair and subsequent electron acceptors. PSI consists of a core antenna complex that captures photons, and an electron transfer chain that converts photonic excitation into a charge separation. The eukaryotic PSI reaction center is composed of at least 11 subunits. P700 is a chlorophyll a/chlorophyll a' dimer, A0 is one or more chlorophyll a, A1 is one or both phylloquinones and FX is a shared 4Fe-4S iron-sulfur center. serves as cofactor.

The protein localises to the plastid. It localises to the chloroplast thylakoid membrane. The catalysed reaction is reduced [plastocyanin] + hnu + oxidized [2Fe-2S]-[ferredoxin] = oxidized [plastocyanin] + reduced [2Fe-2S]-[ferredoxin]. PsaA and PsaB bind P700, the primary electron donor of photosystem I (PSI), as well as the electron acceptors A0, A1 and FX. PSI is a plastocyanin/cytochrome c6-ferredoxin oxidoreductase, converting photonic excitation into a charge separation, which transfers an electron from the donor P700 chlorophyll pair to the spectroscopically characterized acceptors A0, A1, FX, FA and FB in turn. Oxidized P700 is reduced on the lumenal side of the thylakoid membrane by plastocyanin or cytochrome c6. The polypeptide is Photosystem I P700 chlorophyll a apoprotein A1 (Ostreococcus tauri).